Reading from the N-terminus, the 304-residue chain is D-alanine--D-alanine ligase (304 aa).

An ATP-grasp domain is found at 99–293 (KKILRYEGIE…YSKLLDMIIE (195 aa)). 126 to 181 (LDKLGFPLVVKPNSGGSSVGVKIVYDKDELISMLETVFEWDSEVVIEKYIKGEEIT) lines the ATP pocket. 3 residues coordinate Mg(2+): D248, E260, and N262.

It belongs to the D-alanine--D-alanine ligase family. It depends on Mg(2+) as a cofactor. Mn(2+) is required as a cofactor.

It is found in the cytoplasm. It catalyses the reaction 2 D-alanine + ATP = D-alanyl-D-alanine + ADP + phosphate + H(+). Its pathway is cell wall biogenesis; peptidoglycan biosynthesis. Its function is as follows. Cell wall formation. This Bacillus anthracis (strain A0248) protein is D-alanine--D-alanine ligase.